The chain runs to 213 residues: Large ribosomal subunit protein uL3 (213 aa).

N5-methylglutamine is present on Gln151.

The protein belongs to the universal ribosomal protein uL3 family. As to quaternary structure, part of the 50S ribosomal subunit. Forms a cluster with proteins L14 and L19. Methylated by PrmB.

Its function is as follows. One of the primary rRNA binding proteins, it binds directly near the 3'-end of the 23S rRNA, where it nucleates assembly of the 50S subunit. The protein is Large ribosomal subunit protein uL3 of Allorhizobium ampelinum (strain ATCC BAA-846 / DSM 112012 / S4) (Agrobacterium vitis (strain S4)).